We begin with the raw amino-acid sequence, 157 residues long: DNA gyrase inhibitor (157 aa).

It belongs to the DNA gyrase inhibitor family. In terms of assembly, interacts with DNA gyrase.

The protein localises to the cytoplasm. In terms of biological role, inhibits the supercoiling activity of DNA gyrase. Acts by inhibiting DNA gyrase at an early step, prior to (or at the step of) binding of DNA by the gyrase. It protects cells against toxins that target DNA gyrase, by inhibiting activity of these toxins and reducing the formation of lethal double-strand breaks in the cell. This Citrobacter rodentium (strain ICC168) (Citrobacter freundii biotype 4280) protein is DNA gyrase inhibitor.